Consider the following 1352-residue polypeptide: Patatin-like phospholipase domain-containing protein 7 (1352 aa).

The Lumenal segment spans residues 1–36; it reads MQNEEDACLEAGYCLGTTLSSWRLHFMEEQSQSTML. Residues 37–57 form a helical membrane-spanning segment; sequence MGIGIGALLTLAFVGITFFFV. Topologically, residues 58 to 1352 are cytoplasmic; that stretch reads YRRVRRLRRA…DQGPRLEHPS (1295 aa). 170 to 297 provides a ligand contact to a nucleoside 3',5'-cyclic phosphate; sequence VLGHFEKPLF…VRVVQIIMVR (128 aa). The tract at residues 340–364 is disordered; that stretch reads MSYGPEEQLERSLRPSEFSSSDHGS. Phosphoserine is present on residues Ser341 and Ser379. The disordered stretch occupies residues 384-411; the sequence is SNHGEVDELRQSQGSGSNTSAFQESHEG. The span at 394-406 shows a compositional bias: polar residues; sequence QSQGSGSNTSAFQ. A nucleoside 3',5'-cyclic phosphate is bound by residues 499–585 and 613–718; these read FLHV…YEIM and ALDW…LGEK. The involved in the binding to lipid droplets stretch occupies residues 681–967; it reads VHAVRDSELA…RGCAQVGILR (287 aa). The PNPLA domain maps to 950 to 1116; the sequence is LVLGGGGARG…INNLPADVAR (167 aa). The GXGXXG signature appears at 954–959; sequence GGGARG. The GXSXG motif lies at 981–985; the sequence is GTSIG. Residue Ser983 is the Nucleophile of the active site. Asp1103 functions as the Proton acceptor in the catalytic mechanism. The short motif at 1103–1105 is the DGA/G element; that stretch reads DGG. The residue at position 1280 (Ser1280) is a Phosphoserine. Thr1284 bears the Phosphothreonine mark. The segment at 1295–1352 is disordered; sequence KETYADFQSTGIELDSDSEYEPSMLQGPPSLTSPEQSQDSFPWLPNQDDQGPRLEHPS. Polar residues predominate over residues 1323–1334; it reads PSLTSPEQSQDS.

This sequence belongs to the NTE family. In terms of tissue distribution, expressed in white and brown adipose tissue, cardiac muscle, skeletal muscle, and testis. Expressed in white adipose tissue, cardiac muscle, skeletal muscle, and testis.

It is found in the endoplasmic reticulum membrane. Its subcellular location is the lipid droplet. It catalyses the reaction a 1-acyl-sn-glycero-3-phosphocholine + H2O = sn-glycerol 3-phosphocholine + a fatty acid + H(+). It carries out the reaction 1-(9Z-octadecenoyl)-sn-glycero-3-phosphocholine + H2O = sn-glycerol 3-phosphocholine + (9Z)-octadecenoate + H(+). The catalysed reaction is 1-(9Z-octadecenoyl)-sn-glycero-3-phosphoethanolamine + H2O = sn-glycero-3-phosphoethanolamine + (9Z)-octadecenoate + H(+). The enzyme catalyses 1-(9Z-octadecenoyl)-sn-glycero-3-phospho-L-serine + H2O = sn-glycero-3-phospho-L-serine + (9Z)-octadecenoate + H(+). It catalyses the reaction 1-hexadecanoyl-sn-glycero-3-phosphocholine + H2O = sn-glycerol 3-phosphocholine + hexadecanoate + H(+). It carries out the reaction 1-hexadecanoyl-sn-glycero-3-phosphate + H2O = sn-glycerol 3-phosphate + hexadecanoate + H(+). Its activity is regulated as follows. cAMP does not regulate lysophospholipase activity in vitro. Slightly inhibited by organophosphorus (OP) compounds such as mipafox, which is likely why mice are less sensitive to distal axonophathy induced by OPs compared to humans. Functionally, lysophospholipase which preferentially deacylates unsaturated lysophosphatidylcholine (C18:1), generating glycerophosphocholine. Can also deacylate, to a lesser extent, lysophosphatidylethanolamine (C18:1), lysophosphatidyl-L-serine (C18:1) and lysophosphatidic acid (C16:0). Lysophospholipase. In terms of biological role, lacks lysophospholipase activity. The chain is Patatin-like phospholipase domain-containing protein 7 (Pnpla7) from Mus musculus (Mouse).